We begin with the raw amino-acid sequence, 232 residues long: Ribonuclease 3 (232 aa).

The region spanning 9-131 (INLLQKKLGY…IIGGIFLDSN (123 aa)) is the RNase III domain. Residue Glu-44 coordinates Mg(2+). The active site involves Asp-48. Asp-117 and Glu-120 together coordinate Mg(2+). Glu-120 is an active-site residue. The DRBM domain maps to 158–228 (DPKTRLQEYL…AENALKFLIE (71 aa)).

This sequence belongs to the ribonuclease III family. In terms of assembly, homodimer. It depends on Mg(2+) as a cofactor.

The protein resides in the cytoplasm. The catalysed reaction is Endonucleolytic cleavage to 5'-phosphomonoester.. Digests double-stranded RNA. Involved in the processing of primary rRNA transcript to yield the immediate precursors to the large and small rRNAs (23S and 16S). Processes some mRNAs, and tRNAs when they are encoded in the rRNA operon. Processes pre-crRNA and tracrRNA of type II CRISPR loci if present in the organism. The polypeptide is Ribonuclease 3 (Blochmanniella floridana).